The chain runs to 305 residues: Serine/threonine-protein kinase 16 (305 aa).

The N-myristoyl glycine moiety is linked to residue Gly-2. 2 S-palmitoyl cysteine lipidation sites follow: Cys-6 and Cys-8. One can recognise a Protein kinase domain in the interval 20 to 293 (YLFIQKLGEG…PLLLSQLEAL (274 aa)). ATP contacts are provided by residues 26 to 34 (LGEGGFSYV) and Lys-49. Asp-148 serves as the catalytic Proton acceptor. Residues 166 to 202 (DLGSMNQACIHVEGSRQALTLQDWAAQRCTISYRAPE) are activation loop. A Phosphothreonine; by autocatalysis modification is found at Thr-185. Residue Ser-197 is modified to Phosphoserine; by autocatalysis. Tyr-198 is modified (phosphotyrosine; by autocatalysis).

It belongs to the protein kinase superfamily. Ser/Thr protein kinase family. In terms of assembly, monomer. Interacts with DRG1 (via its N-terminal); the interaction phosphorylates DRG1. Post-translationally, mainly autophosphorylated on serine/threonine residues. Also autophosphorylated on Tyr-198. In terms of processing, it is uncertain whether palmitoylation is on Cys-6 and/or Cys-8. As to expression, ubiquitously expressed at very low levels.

Its subcellular location is the cytoplasm. It is found in the perinuclear region. The protein resides in the membrane. It catalyses the reaction L-seryl-[protein] + ATP = O-phospho-L-seryl-[protein] + ADP + H(+). The enzyme catalyses L-threonyl-[protein] + ATP = O-phospho-L-threonyl-[protein] + ADP + H(+). The catalysed reaction is L-tyrosyl-[protein] + ATP = O-phospho-L-tyrosyl-[protein] + ADP + H(+). Functionally, membrane-associated protein kinase that phosphorylates on serine and threonine residues. In vitro substrates include DRG1, ENO1 and EIF4EBP1. Also autophosphorylates. May be involved in secretory vesicle trafficking or intracellular signaling. May have a role in regulating stromal-epithelial interactions that occur during ductal morphogenesis in the mammary gland. May be involved in TGF-beta signaling. Able to autophosphorylate on Tyr residue; it is however unclear whether it has tyrosine-protein kinase toward other proteins. This Homo sapiens (Human) protein is Serine/threonine-protein kinase 16 (STK16).